Consider the following 133-residue polypeptide: Large ribosomal subunit protein eL14 (133 aa).

Belongs to the eukaryotic ribosomal protein eL14 family.

This chain is Large ribosomal subunit protein eL14, found in Pisum sativum (Garden pea).